A 619-amino-acid chain; its full sequence is UPF0329 protein ECU01_0100/ECU01_1510/ECU08_0030 (619 aa).

Residues 350–384 are compositionally biased toward basic and acidic residues; it reads REEREKREKREKREESKGRGKRGAGEAKEESKEED. Positions 350-428 are disordered; it reads REEREKREKR…GKRKGDGHHY (79 aa). Acidic residues predominate over residues 385-399; the sequence is GKEEEGVEAEEEESA. Positions 411-428 are enriched in basic residues; it reads ARRKKSLKGKRKGDGHHY.

Belongs to the UPF0329 family.

The polypeptide is UPF0329 protein ECU01_0100/ECU01_1510/ECU08_0030 (Encephalitozoon cuniculi (strain GB-M1) (Microsporidian parasite)).